The primary structure comprises 423 residues: Large ribosomal subunit protein mL37 (423 aa).

A mitochondrion-targeting transit peptide spans 1–29 (MALASGPARRALAGSGQLGLGGFGAPRRG).

It belongs to the mitochondrion-specific ribosomal protein mL37 family. In terms of assembly, component of the mitochondrial large ribosomal subunit (mt-LSU). Mature mammalian 55S mitochondrial ribosomes consist of a small (28S) and a large (39S) subunit. The 28S small subunit contains a 12S ribosomal RNA (12S mt-rRNA) and 30 different proteins. The 39S large subunit contains a 16S rRNA (16S mt-rRNA), a copy of mitochondrial valine transfer RNA (mt-tRNA(Val)), which plays an integral structural role, and 52 different proteins. mL37 forms a heterodimer with mL65.

Its subcellular location is the mitochondrion. This is Large ribosomal subunit protein mL37 (MRPL37) from Homo sapiens (Human).